A 282-amino-acid polypeptide reads, in one-letter code: MKLVMVSGRSGSGKSVVLRVLEDLGYYCVDNLPLPLMDTLLEQLKGSTDLVAISVDVRNMPEQDKEFLKQLANLPKGTELLSFFLDSSDEVLLKRYSETRRLHPLSRTKTSLKEAIEHERELLEPVSKMVDHYIDTSNLNIYDLSDKIREILLGSVDKELVINFESFGFKYGMPVEADFMFDVRFLPNPHWEPELRPMTGLDEPVQLFLSQQPTVNKFIWQIENLLATWLPHLERNNRSYLTIAIGCTGGQHRSVYVTEQLAKLFANSKHKIQARHRELSDD.

8–15 (GRSGSGKS) contacts ATP. Residue 56–59 (DVRN) participates in GTP binding.

It belongs to the RapZ-like family.

In terms of biological role, displays ATPase and GTPase activities. The polypeptide is Nucleotide-binding protein in ptsN-ptsO intergenic region (Shewanella violacea).